We begin with the raw amino-acid sequence, 381 residues long: NF-kappa-B inhibitor-like protein 1 (381 aa).

The interval 1–34 (MSNPSPQVPEEEASTSVCRPKSSMASTSRRQRRE) is disordered. ANK repeat units follow at residues 64–93 (GQPPPLHRACARHDAPALCLLLRLGADPAH) and 97–133 (HGDTALHAAARQGPDAYTDFFLPLLSRCPSAMGIKNK). 3 disordered regions span residues 131-167 (KNKDGETPGQILGWGPPWDSAEEEEEDDASKEREWRQ), 186-242 (GDAS…QEEE), and 256-294 (ELRESRARRAQEALGDREPKPARAGPRAEHPRGAGRGSL). Ser-150 is subject to Phosphoserine. The span at 150–159 (SAEEEEEDDA) shows a compositional bias: acidic residues. Positions 256 to 287 (ELRESRARRAQEALGDREPKPARAGPRAEHPR) are enriched in basic and acidic residues.

In terms of assembly, interacts with CACTIN (via N-terminal domain); the interaction occurs in a pro-inflammatory-independent manner.

The protein resides in the nucleus. Involved in the regulation of innate immune response. Acts as negative regulator of Toll-like receptor and interferon-regulatory factor (IRF) signaling pathways. Contributes to the negative regulation of transcriptional activation of NF-kappa-B target genes in response to endogenous pro-inflammatory stimuli. This Macaca mulatta (Rhesus macaque) protein is NF-kappa-B inhibitor-like protein 1 (NFKBIL1).